The primary structure comprises 240 residues: Mitochondrial transcription rescue factor 1 (240 aa).

The transit peptide at 1-84 (MAMASVKLLA…ECIFPFSVRL (84 aa)) directs the protein to the mitochondrion. Residues 95–127 (KKSLQKVDEEDSDEESHHDEMSEQEEELEDDPT) are disordered. Serine 106 and serine 116 each carry phosphoserine. Residues 116-126 (SEQEEELEDDP) are compositionally biased toward acidic residues. Residues 142-217 (FRYDVVLKTG…LKKVFEEKTE (76 aa)) form the S4 RNA-binding domain.

In terms of assembly, monomer. Interacts with POLRMT. Interacts (via S4 domain) with MTRFR (via C-terminus). Associates with mitoribosomal S39 large subunit, peptidyl tRNA and nascent chain.

The protein resides in the mitochondrion matrix. Functionally, mitochondrial RNA-binding protein involved in mitochondrial transcription regulation. Functions as a protective factor to maintain proper mitochondrial RNA level during stress. Acts at the transcription level and its protective function depends on its RNA binding ability. Part of a mitoribosome-associated quality control pathway that prevents aberrant translation by responding to interruptions during elongation. As heterodimer with MTRF, ejects the unfinished nascent chain and peptidyl transfer RNA (tRNA), respectively, from stalled ribosomes. Recruitment of mitoribosome biogenesis factors to these quality control intermediates suggests additional roles for MTRES1 and MTRF during mitoribosome rescue. This Homo sapiens (Human) protein is Mitochondrial transcription rescue factor 1.